A 95-amino-acid chain; its full sequence is Antitoxin TacA1 (95 aa).

A neutralization domain region spans residues 59 to 95 (FNFNDEQYEEFINLLDAPVADDPVIEKLLARKPQWDV).

Belongs to the TacA antitoxin family. Homodimer. Forms a complex with cognate toxin TacT1. Forms a 4:2 antitoxin:toxin complex with cognate toxin TacT1.

In terms of biological role, antitoxin component of a type II toxin-antitoxin (TA) system. Counteracts the toxic effect of cognate toxin TacT1 (T8), but not TacT2 or TacT3. Plays a role in persister cell formation. The TacA1-TacT1 complex binds (and probably represses) its own promoter DNA but not that of tacA3-tacT3, it does not repress the tacA3-tacT3 promoter. The polypeptide is Antitoxin TacA1 (Salmonella typhimurium (strain 14028s / SGSC 2262)).